The primary structure comprises 239 residues: MILYPAIDLKDGQAVRLVHGDMDRTTVFNDDPAAQARSFVAAGCTWLHLVDLNGAFAGEPVNAAPVEAILKACPVPAQLGGGIRDMATIERWLNKGLARVILGTVAVENPDLVREAARAFPDQVAVGIDARNGFVATKGWAEETDVQATDLAKSFEDAGVAAIIYTDILRDGAMGGPNTQATADLARAVSIPVIASGGVSSLDDLLALRDSGVISGAISGRALYDGAIDLAQALEALKT.

The Proton acceptor role is filled by Asp-8. Asp-129 acts as the Proton donor in catalysis.

The protein belongs to the HisA/HisF family.

Its subcellular location is the cytoplasm. The enzyme catalyses 1-(5-phospho-beta-D-ribosyl)-5-[(5-phospho-beta-D-ribosylamino)methylideneamino]imidazole-4-carboxamide = 5-[(5-phospho-1-deoxy-D-ribulos-1-ylimino)methylamino]-1-(5-phospho-beta-D-ribosyl)imidazole-4-carboxamide. It participates in amino-acid biosynthesis; L-histidine biosynthesis; L-histidine from 5-phospho-alpha-D-ribose 1-diphosphate: step 4/9. This chain is 1-(5-phosphoribosyl)-5-[(5-phosphoribosylamino)methylideneamino] imidazole-4-carboxamide isomerase, found in Roseobacter denitrificans (strain ATCC 33942 / OCh 114) (Erythrobacter sp. (strain OCh 114)).